Here is a 346-residue protein sequence, read N- to C-terminus: Endosome-associated-trafficking regulator 1 (346 aa).

Residues 46–67 (FVSSNSKRAFSKDSNQSTTQFR) are compositionally biased toward polar residues. Disordered stretches follow at residues 46-77 (FVSS…DGNL), 93-129 (LQED…GDES), and 153-173 (SPPA…SDSE). The stretch at 170-317 (SDSEEGLRLL…SGAQSSIKQL (148 aa)) forms a coiled coil.

It belongs to the ENTR1 family.

The protein localises to the cytoplasm. It is found in the early endosome. It localises to the endosome. Its subcellular location is the recycling endosome. The protein resides in the midbody. The protein localises to the cytoskeleton. It is found in the microtubule organizing center. It localises to the centrosome. Its subcellular location is the cilium basal body. Functionally, endosome-associated protein that plays a role in membrane receptor sorting, cytokinesis and ciliogenesis. The sequence is that of Endosome-associated-trafficking regulator 1 from Xenopus tropicalis (Western clawed frog).